Reading from the N-terminus, the 292-residue chain is Small ribosomal subunit biogenesis GTPase RsgA (292 aa).

A CP-type G domain is found at 65–223; that stretch reads KTELIRPTVA…VVDTPGFSSL (159 aa). GTP is bound by residues 114–117 and 165–173; these read NKLD and GPSGVGKST. Zn(2+) contacts are provided by C247, C252, H254, and C260.

It belongs to the TRAFAC class YlqF/YawG GTPase family. RsgA subfamily. Monomer. Associates with 30S ribosomal subunit, binds 16S rRNA. Requires Zn(2+) as cofactor.

The protein localises to the cytoplasm. One of several proteins that assist in the late maturation steps of the functional core of the 30S ribosomal subunit. Helps release RbfA from mature subunits. May play a role in the assembly of ribosomal proteins into the subunit. Circularly permuted GTPase that catalyzes slow GTP hydrolysis, GTPase activity is stimulated by the 30S ribosomal subunit. In Alkaliphilus metalliredigens (strain QYMF), this protein is Small ribosomal subunit biogenesis GTPase RsgA.